Consider the following 162-residue polypeptide: NADH-quinone oxidoreductase subunit I (162 aa).

4Fe-4S ferredoxin-type domains are found at residues 53–83 (LRRYPNGEERCIACKLCEAVCPALAITIESE) and 93–122 (TRYDIDLTKCIFCGFCEESCPVDSIVETHI). [4Fe-4S] cluster-binding residues include Cys-63, Cys-66, Cys-69, Cys-73, Cys-102, Cys-105, Cys-108, and Cys-112.

It belongs to the complex I 23 kDa subunit family. As to quaternary structure, NDH-1 is composed of 14 different subunits. Subunits NuoA, H, J, K, L, M, N constitute the membrane sector of the complex. It depends on [4Fe-4S] cluster as a cofactor.

The protein resides in the cell inner membrane. It carries out the reaction a quinone + NADH + 5 H(+)(in) = a quinol + NAD(+) + 4 H(+)(out). NDH-1 shuttles electrons from NADH, via FMN and iron-sulfur (Fe-S) centers, to quinones in the respiratory chain. The immediate electron acceptor for the enzyme in this species is believed to be ubiquinone. Couples the redox reaction to proton translocation (for every two electrons transferred, four hydrogen ions are translocated across the cytoplasmic membrane), and thus conserves the redox energy in a proton gradient. The polypeptide is NADH-quinone oxidoreductase subunit I (Bordetella bronchiseptica (strain ATCC BAA-588 / NCTC 13252 / RB50) (Alcaligenes bronchisepticus)).